The chain runs to 499 residues: Probable cytosol aminopeptidase (499 aa).

The Mn(2+) site is built by Lys-271 and Asp-276. Lys-283 is an active-site residue. Asp-294, Asp-353, and Glu-355 together coordinate Mn(2+). Arg-357 is an active-site residue.

It belongs to the peptidase M17 family. Mn(2+) serves as cofactor.

The protein localises to the cytoplasm. The catalysed reaction is Release of an N-terminal amino acid, Xaa-|-Yaa-, in which Xaa is preferably Leu, but may be other amino acids including Pro although not Arg or Lys, and Yaa may be Pro. Amino acid amides and methyl esters are also readily hydrolyzed, but rates on arylamides are exceedingly low.. It catalyses the reaction Release of an N-terminal amino acid, preferentially leucine, but not glutamic or aspartic acids.. Presumably involved in the processing and regular turnover of intracellular proteins. Catalyzes the removal of unsubstituted N-terminal amino acids from various peptides. This is Probable cytosol aminopeptidase from Bordetella parapertussis (strain 12822 / ATCC BAA-587 / NCTC 13253).